The primary structure comprises 111 residues: Cytochrome c (111 aa).

A1 is modified (N-acetylalanine). C22, C25, and H26 together coordinate heme c. K80 carries the post-translational modification N6,N6,N6-trimethyllysine. M88 serves as a coordination point for heme c. K94 is modified (N6,N6,N6-trimethyllysine).

It belongs to the cytochrome c family. Post-translationally, binds 1 heme c group covalently per subunit.

It localises to the mitochondrion intermembrane space. Functionally, electron carrier protein. The oxidized form of the cytochrome c heme group can accept an electron from the heme group of the cytochrome c1 subunit of cytochrome reductase. Cytochrome c then transfers this electron to the cytochrome oxidase complex, the final protein carrier in the mitochondrial electron-transport chain. This chain is Cytochrome c, found in Guizotia abyssinica (Niger).